Reading from the N-terminus, the 734-residue chain is Photosystem I P700 chlorophyll a apoprotein A2 (734 aa).

The next 8 membrane-spanning stretches (helical) occupy residues 46 to 69 (IFAS…FHVA), 135 to 158 (LYTG…LHLQ), 175 to 199 (LNHH…HVAI), 273 to 291 (MAHH…GHMY), 330 to 353 (IHFQ…QHMY), 369 to 395 (AALY…IFFI), 417 to 439 (AIIS…LYVH), and 517 to 535 (FLVH…LILV). The [4Fe-4S] cluster site is built by cysteine 559 and cysteine 568. 2 helical membrane passes run 575-596 (AFYL…YWHW) and 643-665 (LSVW…MFLI). The chlorophyll a site is built by histidine 654, methionine 662, and tyrosine 670. Tryptophan 671 is a phylloquinone binding site. The helical transmembrane segment at 707-727 (LVGLAHFSVGYIFTYAAFLIA) threads the bilayer.

This sequence belongs to the PsaA/PsaB family. In terms of assembly, the PsaA/B heterodimer binds the P700 chlorophyll special pair and subsequent electron acceptors. PSI consists of a core antenna complex that captures photons, and an electron transfer chain that converts photonic excitation into a charge separation. The eukaryotic PSI reaction center is composed of at least 11 subunits. P700 is a chlorophyll a/chlorophyll a' dimer, A0 is one or more chlorophyll a, A1 is one or both phylloquinones and FX is a shared 4Fe-4S iron-sulfur center. is required as a cofactor.

It localises to the plastid. The protein resides in the chloroplast thylakoid membrane. It catalyses the reaction reduced [plastocyanin] + hnu + oxidized [2Fe-2S]-[ferredoxin] = oxidized [plastocyanin] + reduced [2Fe-2S]-[ferredoxin]. In terms of biological role, psaA and PsaB bind P700, the primary electron donor of photosystem I (PSI), as well as the electron acceptors A0, A1 and FX. PSI is a plastocyanin-ferredoxin oxidoreductase, converting photonic excitation into a charge separation, which transfers an electron from the donor P700 chlorophyll pair to the spectroscopically characterized acceptors A0, A1, FX, FA and FB in turn. Oxidized P700 is reduced on the lumenal side of the thylakoid membrane by plastocyanin. This chain is Photosystem I P700 chlorophyll a apoprotein A2, found in Nandina domestica (Heavenly bamboo).